A 426-amino-acid polypeptide reads, in one-letter code: Glutamate-1-semialdehyde 2,1-aminomutase (426 aa).

Lysine 265 carries the N6-(pyridoxal phosphate)lysine modification.

The protein belongs to the class-III pyridoxal-phosphate-dependent aminotransferase family. HemL subfamily. In terms of assembly, homodimer. The cofactor is pyridoxal 5'-phosphate.

It localises to the cytoplasm. It carries out the reaction (S)-4-amino-5-oxopentanoate = 5-aminolevulinate. The protein operates within porphyrin-containing compound metabolism; protoporphyrin-IX biosynthesis; 5-aminolevulinate from L-glutamyl-tRNA(Glu): step 2/2. This Yersinia enterocolitica serotype O:8 / biotype 1B (strain NCTC 13174 / 8081) protein is Glutamate-1-semialdehyde 2,1-aminomutase.